The following is a 147-amino-acid chain: MKRKTLPLLALVATTLFLIACDDRSDDLKAISKFKDLTPPRFSDVVSHQDDVSEEWSQVDYLSGPTLQVLRTRQSPDGCEDGSYYYLVDMQEKTVQPLMNALCIADNIKLEYQEVTDPYTKEKYFEYAHDGKLMGQLLIPSNPDNQE.

An N-terminal signal peptide occupies residues methionine 1–alanine 20. Residue cysteine 21 is the site of N-palmitoyl cysteine attachment. The S-diacylglycerol cysteine moiety is linked to residue cysteine 21.

It to E.coli YfjS.

The protein resides in the cell inner membrane. When overproduced strongly induces degP through the activation of the two-component envelope stress response system CpxA/CpxR. The protein is Lipoprotein YafY (yafY) of Escherichia coli (strain K12).